A 222-amino-acid chain; its full sequence is ER membrane protein complex subunit 7 homolog (222 aa).

The first 16 residues, 1 to 16 (MKSILLLFSLIVLGSA), serve as a signal peptide directing secretion. Residues 17-145 (TEEVSRTEQT…RKREEWRITD (129 aa)) lie on the Extracellular side of the membrane. A helical transmembrane segment spans residues 146–166 (MLFSPMVLMLVVPLVVMLILP). Topologically, residues 167 to 222 (KMTANDPELKKEMENMQMPKVDMPDVGEMMANFFGGSAPAKKKAVTGGSGSGQRRK) are cytoplasmic.

Belongs to the EMC7 family.

The protein localises to the membrane. The sequence is that of ER membrane protein complex subunit 7 homolog from Caenorhabditis elegans.